The sequence spans 113 residues: Large ribosomal subunit protein uL24 (113 aa).

The protein belongs to the universal ribosomal protein uL24 family. In terms of assembly, part of the 50S ribosomal subunit.

Functionally, one of two assembly initiator proteins, it binds directly to the 5'-end of the 23S rRNA, where it nucleates assembly of the 50S subunit. One of the proteins that surrounds the polypeptide exit tunnel on the outside of the subunit. This chain is Large ribosomal subunit protein uL24, found in Micrococcus luteus (Micrococcus lysodeikticus).